We begin with the raw amino-acid sequence, 342 residues long: uncharacterized protein (342 aa).

Residues C41, H63, C94, C97, C100, C108, and E149 each coordinate Zn(2+).

Belongs to the zinc-containing alcohol dehydrogenase family. Zn(2+) serves as cofactor.

This is an uncharacterized protein from Haemophilus influenzae (strain ATCC 51907 / DSM 11121 / KW20 / Rd).